Reading from the N-terminus, the 326-residue chain is Vacuolar protein sorting-associated protein 26A-B (326 aa).

It belongs to the VPS26 family. Component of the heterotrimeric retromer cargo-selective complex (CSC) which is believed to associate with variable sorting nexins to form functionally distinct retromer complex variants.

It localises to the cytoplasm. Its subcellular location is the endosome membrane. It is found in the early endosome. Its function is as follows. Acts as a component of the retromer cargo-selective complex (CSC). The CSC is believed to be the core functional component of retromer or respective retromer complex variants acting to prevent missorting of selected transmembrane cargo proteins into the lysosomal degradation pathway. Retromer mediates retrograde transport of cargo proteins from endosomes to the trans-Golgi network (TGN). In Xenopus laevis (African clawed frog), this protein is Vacuolar protein sorting-associated protein 26A-B (vps26a-b).